Here is a 276-residue protein sequence, read N- to C-terminus: MESISWNTPSVRDALAAVKRDAPFVYGLTNYVAANLSANVLLAVGAAPAIGAAADWPARFGAGANALWINTAALMSSGADTLLTAARAASKAGTRWVLDPVALGAGAPEYDAIVRDLLALRPTVIRGNASELIALAGGTAAGKGVDTTASPESALAFIGDLARRSGAVVAVSGPTDYVTDGVATLAVAGGDARLTRVTGAGCALGALIAALLAQRGAALAAASAAHAIYATAAERAADARGTASFAVRFVDELSLLDPAESSRDRSAGQIGAKRRE.

ATP-binding residues include Arg-126 and Ser-172. Gly-199 is a substrate binding site.

This sequence belongs to the Thz kinase family. Mg(2+) is required as a cofactor.

It carries out the reaction 5-(2-hydroxyethyl)-4-methylthiazole + ATP = 4-methyl-5-(2-phosphooxyethyl)-thiazole + ADP + H(+). Its pathway is cofactor biosynthesis; thiamine diphosphate biosynthesis; 4-methyl-5-(2-phosphoethyl)-thiazole from 5-(2-hydroxyethyl)-4-methylthiazole: step 1/1. Catalyzes the phosphorylation of the hydroxyl group of 4-methyl-5-beta-hydroxyethylthiazole (THZ). In Burkholderia pseudomallei (strain 1106a), this protein is Hydroxyethylthiazole kinase.